The following is a 97-amino-acid chain: Putative CC-type chemokine U83 (97 aa).

2 disulfide bridges follow: Cys-32-Cys-62 and Cys-33-Cys-76.

Belongs to the intercrine beta (chemokine CC) family. Highly divergent.

The protein is Putative CC-type chemokine U83 (U83) of Homo sapiens (Human).